Reading from the N-terminus, the 404-residue chain is Multidrug resistance protein MdtG (404 aa).

The next 11 membrane-spanning stretches (helical) occupy residues 19–39 (LGCF…PLYV), 56–76 (LVFS…GGLA), 90–110 (LGMA…QFLI), 113–133 (ALLG…ATQV), 144–164 (TLST…GLLA), 171–191 (PVFF…FFFI), 222–242 (LFVT…ILTL), 254–274 (IAFI…LSAP), 288–308 (ILIV…FVQT), 317–337 (FLLG…LVYN), and 376–396 (AVFC…WNSL).

It belongs to the major facilitator superfamily. DHA1 family. MdtG (TC 2.A.1.2.20) subfamily.

Its subcellular location is the cell inner membrane. This chain is Multidrug resistance protein MdtG, found in Salmonella typhimurium (strain LT2 / SGSC1412 / ATCC 700720).